A 210-amino-acid polypeptide reads, in one-letter code: Probable nicotinate-nucleotide adenylyltransferase (210 aa).

Belongs to the NadD family.

It carries out the reaction nicotinate beta-D-ribonucleotide + ATP + H(+) = deamido-NAD(+) + diphosphate. It functions in the pathway cofactor biosynthesis; NAD(+) biosynthesis; deamido-NAD(+) from nicotinate D-ribonucleotide: step 1/1. In terms of biological role, catalyzes the reversible adenylation of nicotinate mononucleotide (NaMN) to nicotinic acid adenine dinucleotide (NaAD). In Streptococcus pyogenes serotype M3 (strain ATCC BAA-595 / MGAS315), this protein is Probable nicotinate-nucleotide adenylyltransferase.